A 192-amino-acid polypeptide reads, in one-letter code: Cytidylate kinase (192 aa).

ATP is bound at residue 7-15; it reads GPPGAGKST.

The protein belongs to the cytidylate kinase family. Type 2 subfamily.

The protein resides in the cytoplasm. The enzyme catalyses CMP + ATP = CDP + ADP. It catalyses the reaction dCMP + ATP = dCDP + ADP. The sequence is that of Cytidylate kinase from Haloquadratum walsbyi (strain DSM 16790 / HBSQ001).